Here is a 465-residue protein sequence, read N- to C-terminus: MTTVDTILAAKYPAKAHALRVSESLKARHGGAGVIYLEAQKTRLIEDSDEDMPFRQRRPFFYLTGCLLPDAAVVYDAVKDELTLFIPPINPESVIWSGLPLSPEEAAKLYDVDRVLFTTDVNSTLASIASSHNGQTAAFAIAEQVSEGTSFQGFAETNTTSLKTAIEETRVIKDAYEVALLRKANDISTKAHVAAIHASKTATNERQIEAAIIGACIANGCREQSYHPIVAGGEGGATLHYVRNDVDLVDPVTKQRKNNVLIDAGGEYQTYCADITRVIPLNGRFAPETRQIYEIVLQMQTECIAMLKEGVCWDDVHALAHRIAIRGLLKLGILRGSEDELFEKRVSVAFFPHGLGHYLGMDTHDTGGNPNYEDKDTMFRYLRVRANLPAGSVVTVEPGIYFCRFIIDPILKAPETGKYIDTEVLERYWSVGGVRIEDNIHITKDGSENLTTAPKSIEEVESLAL.

Mn(2+) is bound by residues aspartate 263, aspartate 274, glutamate 397, and glutamate 437.

The protein belongs to the peptidase M24B family. It depends on Mn(2+) as a cofactor.

The catalysed reaction is Release of any N-terminal amino acid, including proline, that is linked to proline, even from a dipeptide or tripeptide.. Catalyzes the removal of a penultimate prolyl residue from the N-termini of peptides. The polypeptide is Probable Xaa-Pro aminopeptidase pepP (pepP) (Penicillium rubens (strain ATCC 28089 / DSM 1075 / NRRL 1951 / Wisconsin 54-1255) (Penicillium chrysogenum)).